The sequence spans 320 residues: Fructose-1,6-bisphosphatase class 1 (320 aa).

Residues E105, D124, L126, and D127 each coordinate Mg(2+). Substrate contacts are provided by residues 127 to 130 (DGSS), Y233, and K263. E269 serves as a coordination point for Mg(2+).

Belongs to the FBPase class 1 family. Homotetramer. Mg(2+) serves as cofactor.

The protein localises to the cytoplasm. It catalyses the reaction beta-D-fructose 1,6-bisphosphate + H2O = beta-D-fructose 6-phosphate + phosphate. Its pathway is carbohydrate biosynthesis; gluconeogenesis. This is Fructose-1,6-bisphosphatase class 1 from Methanocorpusculum labreanum (strain ATCC 43576 / DSM 4855 / Z).